Consider the following 443-residue polypeptide: 23S rRNA (uracil(1939)-C(5))-methyltransferase RlmD (443 aa).

A TRAM domain is found at serine 12–asparagine 70. Residues cysteine 83, cysteine 89, cysteine 92, and cysteine 171 each contribute to the [4Fe-4S] cluster site. Residues glutamine 277, phenylalanine 306, asparagine 311, glutamate 327, aspartate 354, and aspartate 374 each contribute to the S-adenosyl-L-methionine site. Cysteine 400 (nucleophile) is an active-site residue.

Belongs to the class I-like SAM-binding methyltransferase superfamily. RNA M5U methyltransferase family. RlmD subfamily.

It catalyses the reaction uridine(1939) in 23S rRNA + S-adenosyl-L-methionine = 5-methyluridine(1939) in 23S rRNA + S-adenosyl-L-homocysteine + H(+). Catalyzes the formation of 5-methyl-uridine at position 1939 (m5U1939) in 23S rRNA. This Shewanella woodyi (strain ATCC 51908 / MS32) protein is 23S rRNA (uracil(1939)-C(5))-methyltransferase RlmD.